A 313-amino-acid chain; its full sequence is Chemotaxis protein CheV2 (313 aa).

Residues 16-172 (EAQFLCFRLD…VEKMISDVFP (157 aa)) form the CheW-like domain. One can recognise a Response regulatory domain in the interval 193–313 (LILIAEDSLS…IHEMLKKTLS (121 aa)). 4-aspartylphosphate is present on Asp246.

Post-translationally, phosphorylated; probably by transfer of CheAY phosphate group.

Plays a role in chemotaxis signal transduction system in order to colonize the host stomach. May act as a phosphate sink to control the flow of phosphate to CheAY. In Helicobacter pylori (strain ATCC 700392 / 26695) (Campylobacter pylori), this protein is Chemotaxis protein CheV2.